Consider the following 901-residue polypeptide: MAEGVVSFGVQKLWALLNRESERLNGIDEQVDGLKRQLRGLQSLLKDADAKKHGSDRVRNFLEDVKDLVFDAEDIIESYVLNKLRGEGKGVKNHVRRLACFLTDRHKVASDIEGITKRISKVIGEMQSLGIQQQIIDGGRSLSLQDIQREIRQTFPNSSESDLVGVEQSVEELVGPMVEIDNIQVVSISGMGGIGKTTLARQIFHHDLVRRHFDGFAWVCVSQQFTQKHVWQRILQELRPHDGEILQMDEYTIQGKLFQLLETGRYLVVLDDVWKEEDWDRIKEVFPRKRGWKMLLTSRNEGVGLHADPTCLSFRARILNPKESWKLFERIVPRRNETEYEEMEAIGKEMVTYCGGLPLAVKVLGGLLANKHTASEWKRVSENIGAQIVGKSCLDDNSLNSVYRILSLSYEDLPTDLKHCFLYLAHFPEDYKIKTRTLYSYWAAEGIYDGLTILDSGEDYLEELVRRNLVIAEKSNLSWRLKLCQMHDMMREVCISKAKVENFLQIIKVPTSTSTIIAQSPSRSRRLTVHSGKAFHILGHKKKVRSLLVLGLKEDLWIQSASRFQSLPLLRVLDLSSVKFEGGKLPSSIGGLIHLRFLSLHQAVVSHLPSTIRNLKLMLYLNLHVAIGVPVHVPNVLKEMLELRYLSLPLDMHDKTKLELGDLVNLEYLWCFSTQHSSVTDLLRMTKLRFFGVSFSERCTFENLSSSLRQFRKLETLSFIYSRKTYMVDYVGEFVLDFIHLKKLSLGVHLSKIPDQHQLPPHIAHIYLLFCHMEEDPMPILEKLLHLKSVELRRKAFIGRRMVCSKGGFPQLRALQISEQSELEEWIVEEGSMPCLRDLIIHSCEKLEELPDGLKYVTSLKELKIEGMKREWKEKLVGEDYYKVQHIPDVQFFNCDDEQRE.

Positions 15 to 56 (ALLNRESERLNGIDEQVDGLKRQLRGLQSLLKDADAKKHGSD) form a coiled coil. Residues 144-453 (LQDIQREIRQ…AEGIYDGLTI (310 aa)) enclose the NB-ARC domain. ATP-binding positions include 190 to 197 (GMGGIGKT) and 385 to 392 (GAQIVGKS). LRR repeat units lie at residues 567–591 (LPLLRVLDLSSVKFEGGKLPSSIGG), 592–615 (LIHLRFLSLHQAVVSHLPSTIRNL), and 833–858 (MPCLRDLIIHSCEKLEELPDGLKYVT).

The protein belongs to the disease resistance NB-LRR family. RPP8/HRT subfamily.

Disease resistance protein. This is Disease resistance RPP8-like protein 3 (RPP8L3) from Arabidopsis thaliana (Mouse-ear cress).